A 317-amino-acid chain; its full sequence is MNQMWGSIEQYNTVVWHWPIAVYLFLAGLSAGAIISAIIIKWMKGNESSPWDGIIKAGALIAPLTIGAGLLLLIFDLTRPLHFWKLLIFYNFSSVMTLGVLALFAYFPVVLIFLLGVFKKELCDEGPFGFLAPLANIAYSMARPLEIVTFVLAIGVGAYTGFLLSAMYSYPLLNTPILPLLFLASGISAGISGNLLIGLLFFGKSTKGENVGYLHGLDFKVILFEAFLLFILFVGMYYQGGSTAEVAKAALTTGGLASLFWLGVAGMGLALPVVLNVALPHGIKHSSGFVMLNALIVLAGVMALRFYILYAGQTFVG.

Transmembrane regions (helical) follow at residues 20–40 (IAVY…AIII), 54–75 (IIKA…LLIF), 98–118 (LGVL…LGVF), 147–167 (IVTF…LSAM), 182–202 (FLAS…LLFF), 221–237 (VILF…VGMY), 259–279 (LFWL…NVAL), and 289–309 (FVML…FYIL).

Belongs to the NrfD family. As to quaternary structure, functional polysulfide reductase is made up of three different (A, B, and C) subunits.

The protein localises to the cell inner membrane. Could possibly serve as the membrane anchor of the enzyme. In terms of biological role, component of the phosphorylative electron transport system with polysulfide as the terminal acceptor. The sequence is that of Polysulfide reductase chain C (psrC) from Wolinella succinogenes (strain ATCC 29543 / DSM 1740 / CCUG 13145 / JCM 31913 / LMG 7466 / NCTC 11488 / FDC 602W) (Vibrio succinogenes).